We begin with the raw amino-acid sequence, 106 residues long: Iron-sulfur cluster assembly protein CyaY (106 aa).

The protein belongs to the frataxin family.

In terms of biological role, involved in iron-sulfur (Fe-S) cluster assembly. May act as a regulator of Fe-S biogenesis. This Shigella flexneri protein is Iron-sulfur cluster assembly protein CyaY.